Reading from the N-terminus, the 266-residue chain is Mediator of RNA polymerase II transcription subunit 18 (266 aa).

Belongs to the Mediator complex subunit 18 family. As to quaternary structure, component of the Mediator complex.

The protein resides in the nucleus. In terms of biological role, component of the Mediator complex, a coactivator involved in the regulated transcription of nearly all RNA polymerase II-dependent genes. Mediator functions as a bridge to convey information from gene-specific regulatory proteins to the basal RNA polymerase II transcription machinery. Mediator is recruited to promoters by direct interactions with regulatory proteins and serves as a scaffold for the assembly of a functional preinitiation complex with RNA polymerase II and the general transcription factors. This is Mediator of RNA polymerase II transcription subunit 18 (SRB5) from Candida glabrata (strain ATCC 2001 / BCRC 20586 / JCM 3761 / NBRC 0622 / NRRL Y-65 / CBS 138) (Yeast).